Here is a 504-residue protein sequence, read N- to C-terminus: Cobyric acid synthase (504 aa).

The 197-residue stretch at 258–454 (EIEIAIIKLP…LHGIFENDEW (197 aa)) folds into the GATase cobBQ-type domain. Catalysis depends on Cys339, which acts as the Nucleophile. The active site involves His446.

Belongs to the CobB/CobQ family. CobQ subfamily.

It functions in the pathway cofactor biosynthesis; adenosylcobalamin biosynthesis. Functionally, catalyzes amidations at positions B, D, E, and G on adenosylcobyrinic A,C-diamide. NH(2) groups are provided by glutamine, and one molecule of ATP is hydrogenolyzed for each amidation. The chain is Cobyric acid synthase from Prochlorococcus marinus (strain NATL2A).